A 497-amino-acid polypeptide reads, in one-letter code: Probable cytosol aminopeptidase (497 aa).

Residues Lys-262 and Asp-267 each coordinate Mn(2+). The active site involves Lys-274. Mn(2+)-binding residues include Asp-285, Asp-344, and Glu-346. The active site involves Arg-348.

Belongs to the peptidase M17 family. Mn(2+) is required as a cofactor.

It localises to the cytoplasm. It carries out the reaction Release of an N-terminal amino acid, Xaa-|-Yaa-, in which Xaa is preferably Leu, but may be other amino acids including Pro although not Arg or Lys, and Yaa may be Pro. Amino acid amides and methyl esters are also readily hydrolyzed, but rates on arylamides are exceedingly low.. The catalysed reaction is Release of an N-terminal amino acid, preferentially leucine, but not glutamic or aspartic acids.. In terms of biological role, presumably involved in the processing and regular turnover of intracellular proteins. Catalyzes the removal of unsubstituted N-terminal amino acids from various peptides. The sequence is that of Probable cytosol aminopeptidase from Rhizobium etli (strain ATCC 51251 / DSM 11541 / JCM 21823 / NBRC 15573 / CFN 42).